The chain runs to 172 residues: Adenine phosphoribosyltransferase (172 aa).

Belongs to the purine/pyrimidine phosphoribosyltransferase family. As to quaternary structure, homodimer.

It localises to the cytoplasm. It carries out the reaction AMP + diphosphate = 5-phospho-alpha-D-ribose 1-diphosphate + adenine. The protein operates within purine metabolism; AMP biosynthesis via salvage pathway; AMP from adenine: step 1/1. In terms of biological role, catalyzes a salvage reaction resulting in the formation of AMP, that is energically less costly than de novo synthesis. This chain is Adenine phosphoribosyltransferase, found in Synechococcus sp. (strain CC9605).